A 125-amino-acid chain; its full sequence is Small ribosomal subunit protein uS12m (125 aa).

The interval 1–50 is disordered; sequence MPSLNQLIRHGREEKRRTDRTRALDQCPQKQGVCPRVSTRTPKKPNSAPR. Residues 10 to 23 are compositionally biased toward basic and acidic residues; it reads HGREEKRRTDRTRA.

Belongs to the universal ribosomal protein uS12 family.

The protein resides in the mitochondrion. Its function is as follows. Protein S12 is involved in the translation initiation step. The protein is Small ribosomal subunit protein uS12m (RPS12) of Petunia hybrida (Petunia).